The following is a 126-amino-acid chain: Iron-sulfur cluster insertion protein ErpA (126 aa).

The interval 1-21 (MNQPANQFNPSSSQPVDPTVL) is disordered. Positions 54, 118, and 120 each coordinate iron-sulfur cluster.

It belongs to the HesB/IscA family. Homodimer. Requires iron-sulfur cluster as cofactor.

In terms of biological role, required for insertion of 4Fe-4S clusters for at least IspG. The polypeptide is Iron-sulfur cluster insertion protein ErpA (Psychrobacter arcticus (strain DSM 17307 / VKM B-2377 / 273-4)).